The sequence spans 144 residues: Putative sugar phosphate isomerase RT0290 (144 aa).

H12 contributes to the substrate binding site. H101 (proton donor) is an active-site residue. Residue R135 participates in substrate binding.

It belongs to the LacAB/RpiB family.

This chain is Putative sugar phosphate isomerase RT0290, found in Rickettsia typhi (strain ATCC VR-144 / Wilmington).